The primary structure comprises 582 residues: Vesicular glutamate transporter 2 (582 aa).

The Cytoplasmic portion of the chain corresponds to 1–71 (MESVKQRILT…CTCFGLPRRY (71 aa)). Residues 72-92 (IIAIMSGLGFCISFGIRCNLG) traverse the membrane as a helical segment. Residues 93-125 (VAIVDMVNNSTIHRGGKVIKEKAKFNWDPETVG) are Vesicular-facing. N-linked (GlcNAc...) asparagine glycans are attached at residues asparagine 100 and asparagine 101. The chain crosses the membrane as a helical span at residues 126 to 146 (MIHGSFFWGYIITQIPGGYIA). The Cytoplasmic portion of the chain corresponds to 147–148 (SR). A helical membrane pass occupies residues 149-169 (LAANRVFGAAILLTSTLNMLI). Topologically, residues 170–177 (PSAARVHY) are vesicular. Residues 178–198 (GCVIFVRILQGLVEGVTYPAC) form a helical membrane-spanning segment. The Cytoplasmic segment spans residues 199–216 (HGIWSKWAPPLERSRLAT). A helical transmembrane segment spans residues 217–237 (TSFCGSYAGAVIAMPLAGILV). The Vesicular portion of the chain corresponds to 238-244 (QYTGWSS). The helical transmembrane segment at 245-265 (VFYVYGSFGMIWYMFWLLVSY) threads the bilayer. Over 266-310 (ESPAKHPTITDEERRYIEESIGESANLLGAMEKFKTPWRKFFTSM) the chain is Cytoplasmic. Residues 311-331 (PVYAIIVANFCRSWTFYLLLI) form a helical membrane-spanning segment. The Vesicular segment spans residues 332-349 (SQPAYFEEVFGFEISKVG). A helical membrane pass occupies residues 350–370 (MLSAVPHLVMTIIVPIGGQIA). The Cytoplasmic segment spans residues 371–386 (DFLRSKQILSTTTVRK). A helical membrane pass occupies residues 387–407 (IMNCGGFGMEATLLLVVGYSH). The Vesicular portion of the chain corresponds to 408 to 409 (TR). The helical transmembrane segment at 410-430 (GVAISFLVLAVGFSGFAISGF) threads the bilayer. Over 431–443 (NVNHLDIAPRYAS) the chain is Cytoplasmic. Residues 444–464 (ILMGISNGVGTLSGMVCPIIV) traverse the membrane as a helical segment. Residues 465 to 477 (GAMTKNKSREEWQ) lie on the Vesicular side of the membrane. A glycan (N-linked (GlcNAc...) asparagine) is linked at asparagine 470. Residues 478–498 (YVFLIAALVHYGGVIFYAIFA) form a helical membrane-spanning segment. Over 499-582 (SGEKQPWADP…YNYKDRDDYS (84 aa)) the chain is Cytoplasmic.

It belongs to the major facilitator superfamily. Sodium/anion cotransporter family. VGLUT subfamily.

Its subcellular location is the cytoplasmic vesicle. It is found in the secretory vesicle. The protein resides in the synaptic vesicle membrane. The protein localises to the synapse. It localises to the synaptosome. Its subcellular location is the cell membrane. The catalysed reaction is L-glutamate(out) = L-glutamate(in). It carries out the reaction 3 Na(+)(out) + phosphate(out) = 3 Na(+)(in) + phosphate(in). The enzyme catalyses phosphate(in) = phosphate(out). It catalyses the reaction K(+)(in) + H(+)(out) = K(+)(out) + H(+)(in). The catalysed reaction is chloride(in) = chloride(out). Its activity is regulated as follows. Chloride channel activity is allosterically activated by lumenal H(+) and Cl(-) leading to synaptic vesicles acidification. The L-glutamate transport activity is allosterically activated by lumenal H(+) and Cl(-). The allosteric requirement for H(+) efficiently prevents non-vesicular efflux across the plasma membrane. The L-glutamate uniporter activity exhibits a biphasic dependence on chloride concentration. Functionally, multifunctional transporter that transports L-glutamate as well as multiple ions such as chloride, proton, potassium, sodium and phosphate. At the synaptic vesicle membrane, mainly functions as a uniporter which transports preferentially L-glutamate but also, phosphate from the cytoplasm into synaptic vesicles at presynaptic nerve terminals of excitatory neural cells. The L-glutamate or phosphate uniporter activity is electrogenic and is driven by the proton electrochemical gradient, mainly by the electrical gradient established by the vacuolar H(+)-ATPase across the synaptic vesicle membrane. In addition, functions as a chloride channel that allows a chloride permeation through the synaptic vesicle membrane therefore affects the proton electrochemical gradient and promotes synaptic vesicles acidification. Moreover, functions as a vesicular K(+)/H(+) antiport allowing to maintain the electrical gradient and to decrease chemical gradient and therefore sustain vesicular L-glutamate uptake. The vesicular H(+)/H(+) antiport activity is electroneutral. At the plasma membrane, following exocytosis, functions as a symporter of Na(+) and phosphate from the extracellular space to the cytoplasm allowing synaptic phosphate homeostasis regulation. The symporter activity is driven by an inside negative membrane potential and is electrogenic. Also involved in the regulation of retinal hyaloid vessel regression during postnatal development. May also play a role in the endocrine L-glutamatergic system of other tissues such as pineal gland and pancreas. This chain is Vesicular glutamate transporter 2, found in Bos taurus (Bovine).